Here is a 601-residue protein sequence, read N- to C-terminus: Elongation factor 4 (601 aa).

The 183-residue stretch at 7 to 189 folds into the tr-type G domain; the sequence is DNIRNFSIVA…AIVKRLPPPK (183 aa). GTP is bound by residues 19–24 and 136–139; these read DHGKST and NKVD.

The protein belongs to the TRAFAC class translation factor GTPase superfamily. Classic translation factor GTPase family. LepA subfamily.

It localises to the cell inner membrane. The catalysed reaction is GTP + H2O = GDP + phosphate + H(+). Its function is as follows. Required for accurate and efficient protein synthesis under certain stress conditions. May act as a fidelity factor of the translation reaction, by catalyzing a one-codon backward translocation of tRNAs on improperly translocated ribosomes. Back-translocation proceeds from a post-translocation (POST) complex to a pre-translocation (PRE) complex, thus giving elongation factor G a second chance to translocate the tRNAs correctly. Binds to ribosomes in a GTP-dependent manner. This is Elongation factor 4 from Methylorubrum populi (strain ATCC BAA-705 / NCIMB 13946 / BJ001) (Methylobacterium populi).